The chain runs to 179 residues: Gut granule loss protein 3 (179 aa).

The tract at residues 40–59 (DLDSASSGVGSSTCTEEQES) is disordered. Positions 42–54 (DSASSGVGSSTCT) are enriched in polar residues.

The sequence is that of Gut granule loss protein 3 (glo-3) from Caenorhabditis elegans.